Here is a 723-residue protein sequence, read N- to C-terminus: Polyribonucleotide nucleotidyltransferase (723 aa).

Residues Asp-488 and Asp-494 each coordinate Mg(2+). The 60-residue stretch at 555-614 (PKIITLNIKPEKIKDVIGPGGKQINAIIDETGVKIDIEQDGTVYIASQDQAMNRKAIAII) folds into the KH domain. Residues 624–692 (GEVYTGKVRR…QQGRVNLSRK (69 aa)) enclose the S1 motif domain. The segment at 692 to 723 (KALLEKKEQPEGDKKPQAEKKFYPKTKKPESK) is disordered. Over residues 693-723 (ALLEKKEQPEGDKKPQAEKKFYPKTKKPESK) the composition is skewed to basic and acidic residues.

The protein belongs to the polyribonucleotide nucleotidyltransferase family. Mg(2+) is required as a cofactor.

The protein resides in the cytoplasm. It carries out the reaction RNA(n+1) + phosphate = RNA(n) + a ribonucleoside 5'-diphosphate. Its function is as follows. Involved in mRNA degradation. Catalyzes the phosphorolysis of single-stranded polyribonucleotides processively in the 3'- to 5'-direction. The chain is Polyribonucleotide nucleotidyltransferase from Listeria monocytogenes serotype 4a (strain HCC23).